Here is an 88-residue protein sequence, read N- to C-terminus: Apolipoprotein C-I (88 aa).

The N-terminal stretch at 1–26 (MRLFLSLPVLVVVLAMVWEGPAPTQA) is a signal peptide.

This sequence belongs to the apolipoprotein C1 family.

It localises to the secreted. Inhibitor of lipoprotein binding to the low density lipoprotein (LDL) receptor, LDL receptor-related protein, and very low density lipoprotein (VLDL) receptor. Associates with high density lipoproteins (HDL) and the triacylglycerol-rich lipoproteins in the plasma and makes up about 10% of the protein of the VLDL and 2% of that of HDL. Appears to interfere directly with fatty acid uptake and is also the major plasma inhibitor of cholesteryl ester transfer protein (CETP). Binds free fatty acids and reduces their intracellular esterification. Modulates the interaction of APOE with beta-migrating VLDL and inhibits binding of beta-VLDL to the LDL receptor-related protein. In Neomonachus schauinslandi (Hawaiian monk seal), this protein is Apolipoprotein C-I (APOC1).